The following is a 100-amino-acid chain: Urease subunit gamma (100 aa).

This sequence belongs to the urease gamma subunit family. Heterotrimer of UreA (gamma), UreB (beta) and UreC (alpha) subunits. Three heterotrimers associate to form the active enzyme.

The protein resides in the cytoplasm. It carries out the reaction urea + 2 H2O + H(+) = hydrogencarbonate + 2 NH4(+). Its pathway is nitrogen metabolism; urea degradation; CO(2) and NH(3) from urea (urease route): step 1/1. The protein is Urease subunit gamma of Haemophilus influenzae (strain PittGG).